We begin with the raw amino-acid sequence, 341 residues long: uncharacterized protein (341 aa).

Belongs to the cycloisomerase 2 family.

This is an uncharacterized protein from Lactococcus lactis subsp. lactis (strain IL1403) (Streptococcus lactis).